The sequence spans 372 residues: Erythronate-4-phosphate dehydrogenase (372 aa).

Residues S45 and T66 each contribute to the substrate site. NAD(+) is bound at residue D146. R209 is an active-site residue. D233 lines the NAD(+) pocket. Residue E238 is part of the active site. Residue H255 is the Proton donor of the active site. G258 is an NAD(+) binding site. Substrate is bound at residue Y259.

It belongs to the D-isomer specific 2-hydroxyacid dehydrogenase family. PdxB subfamily. As to quaternary structure, homodimer.

Its subcellular location is the cytoplasm. It catalyses the reaction 4-phospho-D-erythronate + NAD(+) = (R)-3-hydroxy-2-oxo-4-phosphooxybutanoate + NADH + H(+). Its pathway is cofactor biosynthesis; pyridoxine 5'-phosphate biosynthesis; pyridoxine 5'-phosphate from D-erythrose 4-phosphate: step 2/5. Its function is as follows. Catalyzes the oxidation of erythronate-4-phosphate to 3-hydroxy-2-oxo-4-phosphonooxybutanoate. In Blochmanniella floridana, this protein is Erythronate-4-phosphate dehydrogenase.